The following is a 317-amino-acid chain: Alkylsulfatase (317 aa).

A substrate-binding site is contributed by H78. Fe cation contacts are provided by H105 and D107. V108 contributes to the substrate binding site. Residue T132 coordinates 2-oxoglutarate. H261 contributes to the Fe cation binding site. 2-oxoglutarate contacts are provided by R272 and R276.

The protein belongs to the TfdA dioxygenase family. As to quaternary structure, homotetramer. It depends on Fe(2+) as a cofactor.

Functionally, alpha-ketoglutarate-dependent dioxygenase that in vitro catalyzes the oxygenolytic release of sulfite from hexylsulfate. The chain is Alkylsulfatase from Acinetobacter baylyi (strain ATCC 33305 / BD413 / ADP1).